A 1007-amino-acid polypeptide reads, in one-letter code: SUPPRESSOR OF ABI3-5 (1007 aa).

Disordered regions lie at residues 1 to 185 (MDPS…RDRE) and 204 to 269 (ESPH…FSAT). Composition is skewed to basic and acidic residues over residues 40–49 (PDERLMRDDV), 94–120 (YYHD…RYDG), 138–185 (HSRD…RDRE), and 204–214 (ESPHKRYEKSR). A compositionally biased stretch (basic residues) spans 227–236 (RSPRGRSHGR). Residues 237–264 (SYREDSYEGDHWNESERRREYEDRHNQD) show a composition bias toward basic and acidic residues. An RRM 1 domain is found at 272–352 (ATVVVKGLSM…RKLMFHYSQP (81 aa)). Residues 378–407 (VPTDWICTICGCINFARRTSCFQCNEPKTK) form a RanBP2-type zinc finger. Residues 432–512 (HVLVVRGLDE…KILRVAYAKS (81 aa)) enclose the RRM 2 domain. 6 disordered regions span residues 556-581 (GEKQ…SAPQ), 631-656 (PDQN…SQQK), 725-755 (HETQ…STGQ), 771-797 (STSN…TLMG), 810-910 (ASSS…GITT), and 945-977 (SGLG…KKVD). Over residues 631-645 (PDQNNESKVTENQPD) the composition is skewed to polar residues. Composition is skewed to low complexity over residues 778 to 793 (SALT…TTGG) and 823 to 835 (PSAS…VSGS). Residues 849–867 (THREQPQTSYRDRAAERRN) show a composition bias toward basic and acidic residues. A G-patch domain is found at 928 to 974 (ESNVGNRMLRNMGWHEGSGLGKDGSGMKEPVQAQGVDRRAGLGSQQK).

Interacts with the pre-spliceosomal component U2AF65A. As to expression, ubiquitous with highest expression in siliques toward the end of seed maturation.

The protein localises to the nucleus. Functionally, splicing factor that controls alternative splicing of the developmental regulator ABI3. Reduces splicing of a cryptic intron in ABI3, leading to a decreased in ABI3-beta transcript. Regulates the splicing of the receptor-like kinase SNC4/LRKL-2.6. The polypeptide is SUPPRESSOR OF ABI3-5 (Arabidopsis thaliana (Mouse-ear cress)).